The following is a 192-amino-acid chain: Peptidyl-tRNA hydrolase (192 aa).

Tyrosine 18 is a binding site for tRNA. Histidine 23 acts as the Proton acceptor in catalysis. The tRNA site is built by phenylalanine 69, asparagine 71, and asparagine 117.

Belongs to the PTH family. As to quaternary structure, monomer.

It localises to the cytoplasm. The catalysed reaction is an N-acyl-L-alpha-aminoacyl-tRNA + H2O = an N-acyl-L-amino acid + a tRNA + H(+). Functionally, hydrolyzes ribosome-free peptidyl-tRNAs (with 1 or more amino acids incorporated), which drop off the ribosome during protein synthesis, or as a result of ribosome stalling. In terms of biological role, catalyzes the release of premature peptidyl moieties from peptidyl-tRNA molecules trapped in stalled 50S ribosomal subunits, and thus maintains levels of free tRNAs and 50S ribosomes. The chain is Peptidyl-tRNA hydrolase from Neisseria meningitidis serogroup A / serotype 4A (strain DSM 15465 / Z2491).